The chain runs to 488 residues: 3-octaprenyl-4-hydroxybenzoate carboxy-lyase (488 aa).

Asn-172 contributes to the Mn(2+) binding site. Prenylated FMN contacts are provided by residues 175–177 (IYR), 189–191 (RWL), and 194–195 (RG). Residue Glu-238 participates in Mn(2+) binding. Asp-287 serves as the catalytic Proton donor.

It belongs to the UbiD family. As to quaternary structure, homohexamer. Requires prenylated FMN as cofactor. Mn(2+) serves as cofactor.

It is found in the cell membrane. It catalyses the reaction a 4-hydroxy-3-(all-trans-polyprenyl)benzoate + H(+) = a 2-(all-trans-polyprenyl)phenol + CO2. The protein operates within cofactor biosynthesis; ubiquinone biosynthesis. In terms of biological role, catalyzes the decarboxylation of 3-octaprenyl-4-hydroxy benzoate to 2-octaprenylphenol, an intermediate step in ubiquinone biosynthesis. The chain is 3-octaprenyl-4-hydroxybenzoate carboxy-lyase from Pseudoalteromonas translucida (strain TAC 125).